We begin with the raw amino-acid sequence, 423 residues long: D-tagatose-1,6-bisphosphate aldolase subunit GatZ (423 aa).

The protein belongs to the GatZ/KbaZ family. GatZ subfamily. Forms a complex with GatY.

The protein operates within carbohydrate metabolism; D-tagatose 6-phosphate degradation; D-glyceraldehyde 3-phosphate and glycerone phosphate from D-tagatose 6-phosphate: step 2/2. Its function is as follows. Component of the tagatose-1,6-bisphosphate aldolase GatYZ that is required for full activity and stability of the Y subunit. Could have a chaperone-like function for the proper and stable folding of GatY. When expressed alone, GatZ does not show any aldolase activity. Is involved in the catabolism of galactitol. The protein is D-tagatose-1,6-bisphosphate aldolase subunit GatZ of Salmonella agona (strain SL483).